Reading from the N-terminus, the 159-residue chain is SsrA-binding protein (159 aa).

Positions 134–159 (KLHDKRETSKERDWNRQKNRLLKERG) are disordered. The span at 137–159 (DKRETSKERDWNRQKNRLLKERG) shows a compositional bias: basic and acidic residues.

This sequence belongs to the SmpB family.

It is found in the cytoplasm. In terms of biological role, required for rescue of stalled ribosomes mediated by trans-translation. Binds to transfer-messenger RNA (tmRNA), required for stable association of tmRNA with ribosomes. tmRNA and SmpB together mimic tRNA shape, replacing the anticodon stem-loop with SmpB. tmRNA is encoded by the ssrA gene; the 2 termini fold to resemble tRNA(Ala) and it encodes a 'tag peptide', a short internal open reading frame. During trans-translation Ala-aminoacylated tmRNA acts like a tRNA, entering the A-site of stalled ribosomes, displacing the stalled mRNA. The ribosome then switches to translate the ORF on the tmRNA; the nascent peptide is terminated with the 'tag peptide' encoded by the tmRNA and targeted for degradation. The ribosome is freed to recommence translation, which seems to be the essential function of trans-translation. This Rhizobium meliloti (strain 1021) (Ensifer meliloti) protein is SsrA-binding protein.